The following is a 376-amino-acid chain: UDP-N-acetylglucosamine--N-acetylmuramyl-(pentapeptide) pyrophosphoryl-undecaprenol N-acetylglucosamine transferase (376 aa).

UDP-N-acetyl-alpha-D-glucosamine is bound by residues 12–14 (TGG), asparagine 125, arginine 165, serine 197, and glutamine 296.

This sequence belongs to the glycosyltransferase 28 family. MurG subfamily.

It localises to the cell inner membrane. The catalysed reaction is di-trans,octa-cis-undecaprenyl diphospho-N-acetyl-alpha-D-muramoyl-L-alanyl-D-glutamyl-meso-2,6-diaminopimeloyl-D-alanyl-D-alanine + UDP-N-acetyl-alpha-D-glucosamine = di-trans,octa-cis-undecaprenyl diphospho-[N-acetyl-alpha-D-glucosaminyl-(1-&gt;4)]-N-acetyl-alpha-D-muramoyl-L-alanyl-D-glutamyl-meso-2,6-diaminopimeloyl-D-alanyl-D-alanine + UDP + H(+). The protein operates within cell wall biogenesis; peptidoglycan biosynthesis. Functionally, cell wall formation. Catalyzes the transfer of a GlcNAc subunit on undecaprenyl-pyrophosphoryl-MurNAc-pentapeptide (lipid intermediate I) to form undecaprenyl-pyrophosphoryl-MurNAc-(pentapeptide)GlcNAc (lipid intermediate II). The polypeptide is UDP-N-acetylglucosamine--N-acetylmuramyl-(pentapeptide) pyrophosphoryl-undecaprenol N-acetylglucosamine transferase (Protochlamydia amoebophila (strain UWE25)).